A 397-amino-acid polypeptide reads, in one-letter code: Na(+)/H(+) antiporter NhaA 3 (397 aa).

11 helical membrane-spanning segments follow: residues 18–38 (AGGI…NSPF), 63–83 (LLLW…GLEL), 98–118 (IALP…IYWW), 129–149 (GWAI…ALLG), 158–178 (IFLT…IAFF), 181–201 (SKIS…LFIC), 207–224 (TTLR…VALL), 269–289 (VAFL…FIGM), 306–326 (LFFG…LFGW), 340–360 (GVAV…SLAF), and 373–393 (LGIV…LRSA).

This sequence belongs to the NhaA Na(+)/H(+) (TC 2.A.33) antiporter family.

It is found in the cell inner membrane. It carries out the reaction Na(+)(in) + 2 H(+)(out) = Na(+)(out) + 2 H(+)(in). Functionally, na(+)/H(+) antiporter that extrudes sodium in exchange for external protons. This is Na(+)/H(+) antiporter NhaA 3 from Saccharophagus degradans (strain 2-40 / ATCC 43961 / DSM 17024).